The following is a 332-amino-acid chain: Pyrroline-5-carboxylate reductase (332 aa).

The protein belongs to the pyrroline-5-carboxylate reductase family.

The enzyme catalyses L-proline + NADP(+) = (S)-1-pyrroline-5-carboxylate + NADPH + 2 H(+). It catalyses the reaction L-proline + NAD(+) = (S)-1-pyrroline-5-carboxylate + NADH + 2 H(+). Its pathway is amino-acid biosynthesis; L-proline biosynthesis; L-proline from L-glutamate 5-semialdehyde: step 1/1. This chain is Pyrroline-5-carboxylate reductase (pro-1), found in Neurospora crassa (strain ATCC 24698 / 74-OR23-1A / CBS 708.71 / DSM 1257 / FGSC 987).